A 221-amino-acid chain; its full sequence is Deoxyribose-phosphate aldolase (221 aa).

Asp-89 acts as the Proton donor/acceptor in catalysis. Catalysis depends on Lys-151, which acts as the Schiff-base intermediate with acetaldehyde. The Proton donor/acceptor role is filled by Lys-180.

This sequence belongs to the DeoC/FbaB aldolase family. DeoC type 1 subfamily.

Its subcellular location is the cytoplasm. The catalysed reaction is 2-deoxy-D-ribose 5-phosphate = D-glyceraldehyde 3-phosphate + acetaldehyde. The protein operates within carbohydrate degradation; 2-deoxy-D-ribose 1-phosphate degradation; D-glyceraldehyde 3-phosphate and acetaldehyde from 2-deoxy-alpha-D-ribose 1-phosphate: step 2/2. Its function is as follows. Catalyzes a reversible aldol reaction between acetaldehyde and D-glyceraldehyde 3-phosphate to generate 2-deoxy-D-ribose 5-phosphate. The polypeptide is Deoxyribose-phosphate aldolase (Mesomycoplasma hyopneumoniae (strain 232) (Mycoplasma hyopneumoniae)).